The primary structure comprises 319 residues: Ficolin-2 (319 aa).

Positions 1 to 22 (MVLGSAALFVLSLCVTELTLHA) are cleaved as a signal peptide. A Collagen-like domain is found at 45 to 101 (GCPGLPGALGPKGEAGAKGDRGESGLPGHPGKAGPTGPKGDRGEKGVRGEKGDTGPS). Residues 53–106 (LGPKGEAGAKGDRGESGLPGHPGKAGPTGPKGDRGEKGVRGEKGDTGPSQSCAT) are disordered. The segment covering 83 to 97 (KGDRGEKGVRGEKGD) has biased composition (basic and acidic residues). The 218-residue stretch at 102-319 (QSCATGPRTC…KVSEMKVRLI (218 aa)) folds into the Fibrinogen C-terminal domain. Cystine bridges form between C104–C132 and C111–C139. Residues D255, D257, and S261 each coordinate Ca(2+). An intrachain disulfide couples C263 to C276. N-linked (GlcNAc...) asparagine glycosylation is present at N306.

It belongs to the ficolin lectin family. As to quaternary structure, homotrimer. Interacts with elastin. Interacts with MASP1 and MASP2.

The protein localises to the secreted. Its function is as follows. May function in innate immunity through activation of the lectin complement pathway. Calcium-dependent and GlcNAc-binding lectin. This chain is Ficolin-2 (Fcn2), found in Rattus norvegicus (Rat).